Here is a 230-residue protein sequence, read N- to C-terminus: Sperm-associated antigen 7 homolog (230 aa).

Positions 1-45 (MADLLGSILSSMEKPPTVHDQESRRKAREQAARLKKLEEDERRKK) are disordered. A compositionally biased stretch (basic and acidic residues) spans 16–45 (PTVHDQESRRKAREQAARLKKLEEDERRKK). In terms of domain architecture, R3H spans 46-109 (AEFRKKMEKE…ESRYVMLFKK (64 aa)). The segment covering 119 to 144 (EAYRKGEEWDPQKAEERRRLKEKAAL) has biased composition (basic and acidic residues). Disordered stretches follow at residues 119–169 (EAYR…KYSH) and 185–230 (ANRA…GSSV). Serine 158 carries the phosphoserine modification. The segment covering 196 to 211 (NKRDTRSIEEAMNEIR) has biased composition (basic and acidic residues).

This is Sperm-associated antigen 7 homolog (spag7) from Danio rerio (Zebrafish).